We begin with the raw amino-acid sequence, 360 residues long: SUN domain-containing protein 3 (360 aa).

Residues 1-10 (MSGRPNSRGS) are compositionally biased toward polar residues. The tract at residues 1–39 (MSGRPNSRGSSRLFRAPSEDASSGSSGSAVLPQEENPNA) is disordered. Residues 1–47 (MSGRPNSRGSSRLFRAPSEDASSGSSGSAVLPQEENPNASGLTRSWK) lie on the Nuclear side of the membrane. The helical transmembrane segment at 48–67 (AVMGMVFILTLLLLGFINHM) threads the bilayer. The Perinuclear space portion of the chain corresponds to 68–360 (KLKEKAFPQK…RVHGTPKDDS (293 aa)). Residues 103–142 (KEQLELLKKESQTLENNFREILFLIEQIDVLKALLRDMQD) adopt a coiled-coil conformation. The SUN domain maps to 196–357 (GASVVEAGTS…YRFRVHGTPK (162 aa)).

As to quaternary structure, self-associates. Interacts with SYNE1 and SPAG4/SUN4. Proposed to form a spermatogenesis-specific LINC complex with SYNE1 during sperm head formation possibly implicating a SUN domain-based heterotrimer with SPAG4/SUN4 associating with SYNE1.

It localises to the membrane. The protein localises to the nucleus envelope. It is found in the nucleus inner membrane. Functionally, as a probable component of the LINC (LInker of Nucleoskeleton and Cytoskeleton) complex, involved in the connection between the nuclear lamina and the cytoskeleton. The nucleocytoplasmic interactions established by the LINC complex play an important role in the transmission of mechanical forces across the nuclear envelope and in nuclear movement and positioning. May be involved in nuclear remodeling during sperm head formation in spermatogenesis. A probable SUN3:SYNE1 LINC complex may tether spermatid nuclei to posterior cytoskeletal structures such as the manchette. The protein is SUN domain-containing protein 3 (SUN3) of Bos taurus (Bovine).